Reading from the N-terminus, the 138-residue chain is Cyclin-dependent kinase 4 inhibitor B (138 aa).

An ANK 1; truncated repeat occupies 13–39; it reads GSDEGLASAAARGLVEKVRQLLEAGAD. ANK repeat units lie at residues 46-74, 79-108, and 112-138; these read FGRR…EPNC, TLTR…RLDV, and WGRL…ATGD.

Belongs to the CDKN2 cyclin-dependent kinase inhibitor family. Heterodimer of CDKN2B with CDK4 or CDK6. Isoform 2 does not interact with CDK4 nor CDK6. Isoform 2 is expressed in normal (keratinocytes, fibroblasts) and tumor cell lines.

The protein localises to the cytoplasm. Functionally, interacts strongly with CDK4 and CDK6. Potent inhibitor. Potential effector of TGF-beta induced cell cycle arrest. In Homo sapiens (Human), this protein is Cyclin-dependent kinase 4 inhibitor B (CDKN2B).